Consider the following 586-residue polypeptide: Acyl-coenzyme A synthetase ACSM3, mitochondrial (586 aa).

Residues Met-1–Ala-27 constitute a mitochondrion transit peptide. Lys-73 and Lys-106 each carry N6-succinyllysine. Lys-157 carries the post-translational modification N6-acetyllysine. ATP is bound by residues Thr-235–Lys-243, Glu-374–Thr-379, Asp-461, Arg-476, and Lys-572.

Belongs to the ATP-dependent AMP-binding enzyme family. It depends on Mg(2+) as a cofactor. Mn(2+) serves as cofactor.

It is found in the mitochondrion. The protein resides in the mitochondrion matrix. It catalyses the reaction a medium-chain fatty acid + ATP + CoA = a medium-chain fatty acyl-CoA + AMP + diphosphate. The enzyme catalyses propanoate + ATP + CoA = propanoyl-CoA + AMP + diphosphate. The catalysed reaction is butanoate + ATP + CoA = butanoyl-CoA + AMP + diphosphate. It carries out the reaction 2-methylpropanoate + ATP + CoA = 2-methylpropanoyl-CoA + AMP + diphosphate. It catalyses the reaction 2-methylbutanoate + ATP + CoA = 2-methylbutanoyl-CoA + AMP + diphosphate. The enzyme catalyses octanoate + ATP + CoA = octanoyl-CoA + AMP + diphosphate. Its function is as follows. Catalyzes the activation of fatty acids by CoA to produce an acyl-CoA, the first step in fatty acid metabolism. Capable of activating medium-chain fatty acids with a preference for isobutyrate among fatty acids with 2-6 carbon atoms. This Homo sapiens (Human) protein is Acyl-coenzyme A synthetase ACSM3, mitochondrial (ACSM3).